The following is a 636-amino-acid chain: Iron transport multicopper oxidase FET3 (636 aa).

Residues 1–21 form the signal peptide; the sequence is MTNALLSIAVLLFSMLSLAQA. Over 22-559 the chain is Extracellular; that stretch reads ETHTFNWTTG…AFIPTGFTKK (538 aa). N-linked (GlcNAc...) asparagine glycans are attached at residues Asn27, Asn74, and Asn77. 2 Plastocyanin-like domains span residues 32–146 and 157–301; these read WDYR…IKDD and SLSL…VYNK. Cu cation-binding residues include His81 and His83. N-linked (GlcNAc...) asparagine glycans are attached at residues Asn88 and Asn113. Cu cation is bound by residues His126 and His128. Asn194, Asn198, Asn244, Asn265, Asn292, Asn300, Asn359, and Asn381 each carry an N-linked (GlcNAc...) asparagine glycan. Positions 362–502 constitute a Plastocyanin-like 3 domain; sequence YTAPKVPTLM…GLGLVLVEDP (141 aa). Cu cation contacts are provided by His413, His416, His418, His483, Cys484, His485, and His489. A helical membrane pass occupies residues 560–584; it reads GIIAMTFSCFAGILGIITIAIYGMM. Residues 585 to 636 are Cytoplasmic-facing; sequence DMEDATEKVIRDLHVDPEVLLNEVDENEERQVNEDRHSTEKHQFLTKAKRFF.

The protein belongs to the multicopper oxidase family. Requires Cu cation as cofactor.

The protein resides in the cell membrane. The enzyme catalyses 4 Fe(2+) + O2 + 4 H(+) = 4 Fe(3+) + 2 H2O. The catalysed reaction is 4 Cu(+) + O2 + 4 H(+) = 4 Cu(2+) + 2 H2O. In terms of biological role, iron transport multicopper ferroxidase required for Fe(2+) ion high affinity uptake. Required to oxidize Fe(2+) to Fe(3+), which is then transported into the cell via the ferric iron permease FTR1. Essential component of copper-dependent iron transport. Also has cuprous oxidase activity. In Saccharomyces cerevisiae (strain ATCC 204508 / S288c) (Baker's yeast), this protein is Iron transport multicopper oxidase FET3 (FET3).